The primary structure comprises 213 residues: tRNA (guanine-N(7)-)-methyltransferase (213 aa).

Positions 38, 63, 91, and 113 each coordinate S-adenosyl-L-methionine. Residue D113 is part of the active site. Substrate contacts are provided by residues K117, D149, and 192-195; that span reads TEYE.

It belongs to the class I-like SAM-binding methyltransferase superfamily. TrmB family.

The enzyme catalyses guanosine(46) in tRNA + S-adenosyl-L-methionine = N(7)-methylguanosine(46) in tRNA + S-adenosyl-L-homocysteine. It functions in the pathway tRNA modification; N(7)-methylguanine-tRNA biosynthesis. Functionally, catalyzes the formation of N(7)-methylguanine at position 46 (m7G46) in tRNA. The chain is tRNA (guanine-N(7)-)-methyltransferase from Mycoplasmoides gallisepticum (strain R(low / passage 15 / clone 2)) (Mycoplasma gallisepticum).